Reading from the N-terminus, the 913-residue chain is Alanine--tRNA ligase (913 aa).

Residues H600, H604, C703, and H707 each coordinate Zn(2+).

Belongs to the class-II aminoacyl-tRNA synthetase family. The cofactor is Zn(2+).

The protein localises to the cytoplasm. It catalyses the reaction tRNA(Ala) + L-alanine + ATP = L-alanyl-tRNA(Ala) + AMP + diphosphate. Functionally, catalyzes the attachment of alanine to tRNA(Ala) in a two-step reaction: alanine is first activated by ATP to form Ala-AMP and then transferred to the acceptor end of tRNA(Ala). Also edits incorrectly charged Ser-tRNA(Ala) and Gly-tRNA(Ala) via its editing domain. The chain is Alanine--tRNA ligase from Methanothrix thermoacetophila (strain DSM 6194 / JCM 14653 / NBRC 101360 / PT) (Methanosaeta thermophila).